The following is a 607-amino-acid chain: Polyphenol oxidase, chloroplastic (607 aa).

The transit peptide at 1–103 (MASLPWSLTT…LGATKPLAFG (103 aa)) directs the protein to the chloroplast. The disordered stretch occupies residues 39–73 (RNRSRRFAPSKVSCNSANGDPNSDSTSDVRETSSG). Polar residues predominate over residues 50–64 (VSCNSANGDPNSDST). Intrachain disulfides connect cysteine 114/cysteine 129 and cysteine 128/cysteine 191. Residues histidine 190, histidine 211, histidine 220, histidine 342, histidine 346, and histidine 375 each coordinate Cu cation. A cross-link (2'-(S-cysteinyl)-histidine (Cys-His)) is located at residues 194–211 (CQGAYDQVGYTDLELQVH).

This sequence belongs to the tyrosinase family. It depends on Cu(2+) as a cofactor.

The protein resides in the plastid. It is found in the chloroplast thylakoid lumen. It catalyses the reaction 2 catechol + O2 = 2 1,2-benzoquinone + 2 H2O. In terms of biological role, catalyzes the oxidation of mono- and o-diphenols to o-diquinones. In Vitis vinifera (Grape), this protein is Polyphenol oxidase, chloroplastic.